Here is a 1719-residue protein sequence, read N- to C-terminus: Cilia- and flagella-associated protein 43 (1719 aa).

A disordered region spans residues 94–120; that stretch reads VREEGAGGGADKPSGSGAVSGKQQSSG. WD repeat units follow at residues 122–165, 174–214, 226–263, 308–345, 413–452, and 513–552; these read SVVL…GRCR, SSTS…EKAV, PAGA…PLQL, TSGA…AAAI, CHVG…LLGR, and LHSA…GRVR. The tract at residues 569 to 596 is disordered; the sequence is TWPRSDGGSGAASGHAQAGPVSTTSAEG. 2 WD repeats span residues 697–736 and 749–788; these read AHAR…LAAQ and ITAG…AVAN. Residues 1022–1045 are disordered; the sequence is RAKQEAARKADEDAAKRSAKDNAG. The stretch at 1073–1114 is one WD 9 repeat; that stretch reads PKPAWLVALGVEPDAVNPKLITEEQNRELKEWQAKEKSLQEE. Disordered regions lie at residues 1220 to 1269, 1277 to 1296, and 1325 to 1372; these read MPGG…AAAA, ATAA…GAAG, and TLNP…AAAA. A compositionally biased stretch (gly residues) spans 1221-1233; it reads PGGGAIGAAGGHQ. Residues 1257 to 1269 are compositionally biased toward low complexity; that stretch reads ASLAHSPSGAAAA. Over residues 1344-1358 the composition is skewed to low complexity; the sequence is SSALHPSHSHASVHG. Coiled coils occupy residues 1524-1609 and 1651-1679; these read AAQW…RSAQ and HKKL…RLRT. A disordered region spans residues 1685 to 1719; sequence ESGAVAGMPSPPRRLPPDIKLLAGSPSSSSVAGRT. The segment covering 1709 to 1719 has biased composition (polar residues); it reads SPSSSSVAGRT.

The protein belongs to the CFAP43 family.

It is found in the cell projection. The protein localises to the cilium. Its subcellular location is the flagellum. The protein resides in the cytoplasm. It localises to the cytoskeleton. It is found in the flagellum axoneme. In terms of biological role, flagellar protein involved in flagellum axoneme organization and function. The sequence is that of Cilia- and flagella-associated protein 43 from Chlamydomonas reinhardtii (Chlamydomonas smithii).